The sequence spans 86 residues: Curamycin polyketide synthase acyl carrier protein (86 aa).

Residues 7-86 (QVTVEELATL…VVNGALASGA (80 aa)) enclose the Carrier domain. An O-(pantetheine 4'-phosphoryl)serine modification is found at serine 44.

Post-translationally, 4'-phosphopantetheine is transferred from CoA to a specific serine of the apo-ACP-like protein.

The protein operates within antibiotic biosynthesis; curamycin biosynthesis. Acyl carrier protein. This Streptomyces cyaneus (Streptomyces curacoi) protein is Curamycin polyketide synthase acyl carrier protein (curE).